The chain runs to 160 residues: Transcriptional regulator MraZ (160 aa).

SpoVT-AbrB domains lie at 5-50 (KFDT…GDQV) and 93-136 (AVEC…SQAV).

The protein belongs to the MraZ family. In terms of assembly, forms oligomers.

The protein resides in the cytoplasm. It localises to the nucleoid. The polypeptide is Transcriptional regulator MraZ (Geobacter sp. (strain M21)).